Reading from the N-terminus, the 354-residue chain is Nicotinate-nucleotide--dimethylbenzimidazole phosphoribosyltransferase (354 aa).

Catalysis depends on Glu313, which acts as the Proton acceptor.

This sequence belongs to the CobT family.

The enzyme catalyses 5,6-dimethylbenzimidazole + nicotinate beta-D-ribonucleotide = alpha-ribazole 5'-phosphate + nicotinate + H(+). Its pathway is nucleoside biosynthesis; alpha-ribazole biosynthesis; alpha-ribazole from 5,6-dimethylbenzimidazole: step 1/2. Catalyzes the synthesis of alpha-ribazole-5'-phosphate from nicotinate mononucleotide (NAMN) and 5,6-dimethylbenzimidazole (DMB). This chain is Nicotinate-nucleotide--dimethylbenzimidazole phosphoribosyltransferase, found in Ralstonia nicotianae (strain ATCC BAA-1114 / GMI1000) (Ralstonia solanacearum).